Reading from the N-terminus, the 184-residue chain is H(2)/formate:CoB-CoM heterodisulfide,ferredoxin reductase subunit C2 (184 aa).

4Fe-4S ferredoxin-type domains lie at 24 to 54 (GEKEVASLKSCYQCGTCTGSCPSGRRTAYRT) and 65 to 97 (IDSVLDSDDIWKCTTCYTCYERCPRDVKVTEII). Residues Cys34, Cys37, Cys40, Cys44, Cys77, Cys80, Cys83, and Cys87 each contribute to the [4Fe-4S] cluster site.

The protein belongs to the HdrC family. As to quaternary structure, the heterodisulfide reductase is composed of three subunits; HdrA, HdrB and HdrC. B1 and B2 subunits are interchangeable, as are the C1 and C2 subunits. The heterodisulfide reductase forms a supercomplex with formylmethanofuran dehydrogenase (Fwd), F(420)-non-reducing hydrogenase (Vhu) and formate dehydrogenase (Fdh). [4Fe-4S] cluster is required as a cofactor.

The catalysed reaction is coenzyme B + coenzyme M + 2 reduced [2Fe-2S]-[ferredoxin] + 2 H(+) = coenzyme M-coenzyme B heterodisulfide + 2 H2 + 2 oxidized [2Fe-2S]-[ferredoxin]. It catalyses the reaction coenzyme B + coenzyme M + 2 reduced [2Fe-2S]-[ferredoxin] + 2 CO2 = coenzyme M-coenzyme B heterodisulfide + 2 formate + 2 oxidized [2Fe-2S]-[ferredoxin]. The protein operates within cofactor metabolism; coenzyme M-coenzyme B heterodisulfide reduction; coenzyme B and coenzyme M from coenzyme M-coenzyme B heterodisulfide: step 1/1. Functionally, part of a complex that catalyzes the reversible reduction of CoM-S-S-CoB to the thiol-coenzymes H-S-CoM (coenzyme M) and H-S-CoB (coenzyme B). The protein is H(2)/formate:CoB-CoM heterodisulfide,ferredoxin reductase subunit C2 of Methanococcus maripaludis (strain DSM 14266 / JCM 13030 / NBRC 101832 / S2 / LL).